A 130-amino-acid polypeptide reads, in one-letter code: Small ribosomal subunit protein uS8 (130 aa).

Belongs to the universal ribosomal protein uS8 family. In terms of assembly, part of the 30S ribosomal subunit.

In terms of biological role, one of the primary rRNA binding proteins, it binds directly to 16S rRNA central domain where it helps coordinate assembly of the platform of the 30S subunit. The sequence is that of Small ribosomal subunit protein uS8 from Methanococcoides burtonii (strain DSM 6242 / NBRC 107633 / OCM 468 / ACE-M).